A 1697-amino-acid polypeptide reads, in one-letter code: UDP-sugar-dependent glycosyltransferase 52 (1697 aa).

2 disordered regions span residues His-20 to Asn-40 and Ser-142 to Pro-166. In terms of domain architecture, PH spans Asp-234–Lys-332. Disordered stretches follow at residues Phe-573–Glu-645 and Pro-707–Gln-756. Low complexity-rich tracts occupy residues Gln-584 to Ala-628 and Gln-711 to Gln-722. GRAM domains lie at Ser-658–Arg-793 and Ile-881–Ser-948. Acidic residues predominate over residues Thr-739–Phe-749. Disordered regions lie at residues Ser-1011–Thr-1047, Asp-1062–Phe-1085, Ser-1110–Thr-1130, and Glu-1466–Ser-1488. Low complexity-rich tracts occupy residues Pro-1026–Thr-1047, Asn-1065–Ser-1084, Gln-1112–Thr-1130, and Asn-1469–Asn-1479. The FYVE-type zinc finger occupies Ser-1622–Gln-1685. Residues Cys-1628, Cys-1631, Cys-1647, Cys-1650, Cys-1655, Cys-1658, Cys-1677, and Cys-1680 each contribute to the Zn(2+) site.

The protein belongs to the glycosyltransferase 28 family.

The catalysed reaction is a sterol + UDP-alpha-D-glucose = a sterol 3-beta-D-glucoside + UDP + H(+). Its function is as follows. Involved in the biosynthesis of sterol glucoside. Can use different sterols such as cholesterol, sitosterol, and ergosterol as sugar acceptors. This Dictyostelium discoideum (Social amoeba) protein is UDP-sugar-dependent glycosyltransferase 52 (ugt52).